Consider the following 343-residue polypeptide: Undecaprenyl-diphosphatase 2 (343 aa).

Helical transmembrane passes span 21–41, 57–77, 104–124, and 129–149; these read LFPVSSLGHSVLIPALIGGSW, PYLTFVVGLHVATAVALLVFF, LAWLIVAATVPVGIIGLALEH, and LFAKPLAAALFLTANGMILLA. Residues 179–193 are compositionally biased toward low complexity; sequence VPAPATVPTQTTSAP. Residues 179–202 are disordered; sequence VPAPATVPTQTTSAPGGRATARHT. Transmembrane regions (helical) follow at residues 225–245, 265–285, 294–314, and 322–342; these read AGVIGLFQTLALLAGISRSGI, FLLATPVILAAGLLKLPALAG, QVILGALIAGIAAYLSIRFLV, and LTPFAIYCLLTGALCTVRFAI.

Belongs to the UppP family.

The protein resides in the cell membrane. It catalyses the reaction di-trans,octa-cis-undecaprenyl diphosphate + H2O = di-trans,octa-cis-undecaprenyl phosphate + phosphate + H(+). Functionally, catalyzes the dephosphorylation of undecaprenyl diphosphate (UPP). Confers resistance to bacitracin. In Frankia alni (strain DSM 45986 / CECT 9034 / ACN14a), this protein is Undecaprenyl-diphosphatase 2.